Consider the following 361-residue polypeptide: Palmitoyltransferase ZDHHC2 (361 aa).

The Cytoplasmic segment spans residues 1-15 (MAPSGSRSFDCWRVL). A helical membrane pass occupies residues 16 to 36 (YWIPVLFISLIVAWSYYAYVV). Topologically, residues 37–50 (QLCIETIENMGEKT) are lumenal. A helical membrane pass occupies residues 51 to 71 (VYLLIYHLLFLMFVWSYWQTI). Topologically, residues 72 to 167 (YSKPMNPLKE…NNCVGFANYK (96 aa)) are cytoplasmic. Positions 124–174 (RYCDRCLLLKPDRCHHCSACDMCILKMDHHCPWVNNCVGFANYKFFMLFLA) constitute a DHHC domain. Cys154 serves as the catalytic S-palmitoyl cysteine intermediate. Residues 168–188 (FFMLFLAYSLLYCLFVTATDM) form a helical membrane-spanning segment. At 189–207 (QYFIQFWTNGLPDTQAKFH) the chain is on the lumenal side. The chain crosses the membrane as a helical span at residues 208–228 (IMFLFFAASTFSVSLAFLFAY). Residues 229 to 361 (HCWLVCKNRS…NPALTIEKET (133 aa)) are Cytoplasmic-facing. The mediates localization to plasma membrane and recycling endosomes stretch occupies residues 296–361 (NPDPEQPSIP…NPALTIEKET (66 aa)). The span at 299–308 (PEQPSIPPGR) shows a compositional bias: pro residues. The disordered stretch occupies residues 299 to 361 (PEQPSIPPGR…NPALTIEKET (63 aa)). The segment covering 331 to 340 (SRLLNNGQTD) has biased composition (polar residues). The short motif at 333–334 (LL) is the Non-canonical dileucine endocytic signal element. Residues 352–355 (NPAL) carry the NPxY-like endocytic signal motif.

Belongs to the DHHC palmitoyltransferase family. As to quaternary structure, monomer. Homodimer. The monomeric form has a higher catalytic activity. Autopalmitoylated.

It is found in the endoplasmic reticulum membrane. Its subcellular location is the golgi apparatus membrane. The protein localises to the postsynaptic density. The protein resides in the postsynaptic recycling endosome membrane. It localises to the cell membrane. The catalysed reaction is L-cysteinyl-[protein] + hexadecanoyl-CoA = S-hexadecanoyl-L-cysteinyl-[protein] + CoA. It carries out the reaction L-cysteinyl-[protein] + tetradecanoyl-CoA = S-tetradecanoyl-L-cysteinyl-[protein] + CoA. It catalyses the reaction L-cysteinyl-[protein] + octadecanoyl-CoA = S-octadecanoyl-L-cysteinyl-[protein] + CoA. Functionally, palmitoyltransferase that catalyzes the addition of palmitate onto various protein substrates and is involved in a variety of cellular processes. Has no stringent fatty acid selectivity and in addition to palmitate can also transfer onto target proteins myristate from tetradecanoyl-CoA and stearate from octadecanoyl-CoA. In Danio rerio (Zebrafish), this protein is Palmitoyltransferase ZDHHC2.